The primary structure comprises 760 residues: Probable ubiquitin carboxyl-terminal hydrolase creB (760 aa).

The tract at residues 1-28 (MGSFLRSFRNNAGSTTPSVGAVPAKKEV) is disordered. Over residues 8–18 (FRNNAGSTTPS) the composition is skewed to polar residues. The region spanning 55–469 (YGMENYGNTC…CAYVLFYQET (415 aa)) is the USP domain. C64 functions as the Nucleophile in the catalytic mechanism. 2 disordered regions span residues 114–146 (AEAQ…DSPD) and 242–270 (PAAI…KTPN). Residues 258-270 (VDQSASSGSKTPN) show a composition bias toward polar residues. The Proton acceptor role is filled by H420. A disordered region spans residues 520–760 (EEHNRPNGLK…LRKKSFSILS (241 aa)). Residues 575 to 635 (KSDVQGKKER…AALEASKASK (61 aa)) are a coiled coil. Composition is skewed to basic and acidic residues over residues 578–626 (VQGK…ELKA), 635–651 (KAQE…KDKL), and 708–742 (DPKD…ERTG). The span at 743-760 (HGKWRSFSLRKKSFSILS) shows a compositional bias: basic residues.

The protein belongs to the peptidase C19 family. Interacts with creA, creC and qutD.

It carries out the reaction Thiol-dependent hydrolysis of ester, thioester, amide, peptide and isopeptide bonds formed by the C-terminal Gly of ubiquitin (a 76-residue protein attached to proteins as an intracellular targeting signal).. In terms of biological role, ubiquitin thioesterase component of the regulatory network controlling carbon source utilization through ubiquitination and deubiquitination involving creA, creB, creC, creD and acrB. Deubiquitinates the creA catabolic repressor and the quinate permease qutD. Also plays a role in response to carbon starvation and the control of extracellular proteases activity. This Aspergillus clavatus (strain ATCC 1007 / CBS 513.65 / DSM 816 / NCTC 3887 / NRRL 1 / QM 1276 / 107) protein is Probable ubiquitin carboxyl-terminal hydrolase creB (creB).